Reading from the N-terminus, the 294-residue chain is 4-hydroxy-tetrahydrodipicolinate synthase (294 aa).

Position 47 (Thr-47) interacts with pyruvate. Catalysis depends on Tyr-135, which acts as the Proton donor/acceptor. The active-site Schiff-base intermediate with substrate is Lys-163. Val-205 is a binding site for pyruvate.

It belongs to the DapA family. As to quaternary structure, homotetramer; dimer of dimers.

Its subcellular location is the cytoplasm. The catalysed reaction is L-aspartate 4-semialdehyde + pyruvate = (2S,4S)-4-hydroxy-2,3,4,5-tetrahydrodipicolinate + H2O + H(+). It functions in the pathway amino-acid biosynthesis; L-lysine biosynthesis via DAP pathway; (S)-tetrahydrodipicolinate from L-aspartate: step 3/4. In terms of biological role, catalyzes the condensation of (S)-aspartate-beta-semialdehyde [(S)-ASA] and pyruvate to 4-hydroxy-tetrahydrodipicolinate (HTPA). The polypeptide is 4-hydroxy-tetrahydrodipicolinate synthase (Rickettsia bellii (strain RML369-C)).